A 333-amino-acid polypeptide reads, in one-letter code: Testin-2 (333 aa).

The first 17 residues, Met1 to Thr17, serve as a signal peptide directing secretion. Intrachain disulfides connect Cys135/Cys178, Cys169/Cys211, and Cys269/Cys322. N-linked (GlcNAc...) asparagine glycosylation occurs at Asn173. Residues His276 and Asn300 contribute to the active site.

It belongs to the peptidase C1 family. Expressed in testis and ovary. Low level in spleen, epididymis, kidney, and uterus. Expressed in primary cultures of Sertoli cells.

Its subcellular location is the secreted. The protein is Testin-2 of Mus musculus (Mouse).